A 399-amino-acid polypeptide reads, in one-letter code: Acetate kinase (399 aa).

Position 10 (asparagine 10) interacts with Mg(2+). Residue lysine 17 participates in ATP binding. A substrate-binding site is contributed by arginine 91. Catalysis depends on aspartate 148, which acts as the Proton donor/acceptor. ATP-binding positions include 208–212, 283–285, and 331–335; these read HLGNG, DCR, and GIGEN. Glutamate 385 lines the Mg(2+) pocket.

The protein belongs to the acetokinase family. Homodimer. Requires Mg(2+) as cofactor. The cofactor is Mn(2+).

The protein resides in the cytoplasm. It carries out the reaction acetate + ATP = acetyl phosphate + ADP. Its pathway is metabolic intermediate biosynthesis; acetyl-CoA biosynthesis; acetyl-CoA from acetate: step 1/2. Catalyzes the formation of acetyl phosphate from acetate and ATP. Can also catalyze the reverse reaction. The polypeptide is Acetate kinase (Shewanella amazonensis (strain ATCC BAA-1098 / SB2B)).